The following is a 117-amino-acid chain: Putative pterin-4-alpha-carbinolamine dehydratase (117 aa).

The protein belongs to the pterin-4-alpha-carbinolamine dehydratase family.

It catalyses the reaction (4aS,6R)-4a-hydroxy-L-erythro-5,6,7,8-tetrahydrobiopterin = (6R)-L-erythro-6,7-dihydrobiopterin + H2O. This Azoarcus sp. (strain BH72) protein is Putative pterin-4-alpha-carbinolamine dehydratase.